A 446-amino-acid chain; its full sequence is Tetratricopeptide repeat protein 23 (446 aa).

5 TPR repeats span residues 45–78, 137–170, 186–219, 310–347, and 356–389; these read LRLS…TRIC, VELF…SKEM, ARIK…TEIS, TAKF…KVAV, and AETY…QTLL. The tract at residues 410–446 is disordered; sequence APEVPARPRPSPGAKAAFCAGGRPYSVPGRTRPSAAD.

Associated with the EvC complex composed of EFCAB7, IQCE, EVC2 and EVC.

It localises to the cell projection. The protein localises to the cilium. Its function is as follows. Participates positively in the ciliary Hedgehog (Hh) signaling. The chain is Tetratricopeptide repeat protein 23 (TTC23) from Bos taurus (Bovine).